We begin with the raw amino-acid sequence, 212 residues long: Protein G1-like7 (212 aa).

The span at 1–22 (MDPSGPGPSSAAAGGAPAVAAA) shows a compositional bias: low complexity. 2 disordered regions span residues 1–34 (MDPS…RYES) and 148–212 (KARG…PSAS). The 128-residue stretch at 31–158 (RYESQKRRDW…ARGIPYEKKK (128 aa)) folds into the ALOG domain. The Nuclear localization signal motif lies at 156–160 (KKKRK). Residues 167–182 (PAGVEPSGSSSAAAAA) are compositionally biased toward low complexity. A compositionally biased stretch (gly residues) spans 183-194 (AGGGDAGSGGGA). Positions 195–212 (AATTTAQPGGSGTAPSAS) are enriched in low complexity.

It belongs to the plant homeotic and developmental regulators ALOG protein family.

Its subcellular location is the nucleus. Functionally, probable transcription regulator that acts as a developmental regulator by promoting cell growth in response to light. The protein is Protein G1-like7 (G1L7) of Oryza sativa subsp. japonica (Rice).